Here is a 299-residue protein sequence, read N- to C-terminus: Glutamyl-Q tRNA(Asp) synthetase (299 aa).

L-glutamate contacts are provided by residues Arg-9–Ser-13 and Glu-45. Residues Pro-12 to Ser-22 carry the 'HIGH' region motif. Residues Cys-101, Cys-103, and Cys-118 each contribute to the Zn(2+) site. L-glutamate is bound by residues Tyr-170 and Arg-188. The 'KMSKS' region signature appears at Lys-226 to Ser-230. Lys-229 contacts ATP.

It belongs to the class-I aminoacyl-tRNA synthetase family. GluQ subfamily. The cofactor is Zn(2+).

Catalyzes the tRNA-independent activation of glutamate in presence of ATP and the subsequent transfer of glutamate onto a tRNA(Asp). Glutamate is transferred on the 2-amino-5-(4,5-dihydroxy-2-cyclopenten-1-yl) moiety of the queuosine in the wobble position of the QUC anticodon. This is Glutamyl-Q tRNA(Asp) synthetase from Xanthomonas axonopodis pv. citri (strain 306).